A 321-amino-acid polypeptide reads, in one-letter code: F420-non-reducing hydrogenase iron-sulfur subunit G (321 aa).

Belongs to the [NiFe]/[NiFeSe] hydrogenase small subunit family. The F420-non-reducing hydrogenase is composed of three subunits; MvhA, MvhD and MvhG. It forms a complex with the heterodisulfide reductase (Hdr).

The protein localises to the cytoplasm. Its function is as follows. Part of a complex that provides reducing equivalents for heterodisulfide reductase. This is F420-non-reducing hydrogenase iron-sulfur subunit G (mvhG) from Archaeoglobus profundus (strain DSM 5631 / JCM 9629 / NBRC 100127 / Av18).